We begin with the raw amino-acid sequence, 839 residues long: Transcription regulator protein BACH2 (839 aa).

A BTB domain is found at 37-103 (CDVTLIVERK…AYTAKLLLSR (67 aa)). Disordered regions lie at residues 150–170 (QRPQEDHGNSAGEEEEEEETM) and 247–331 (HGTS…LDRS). Residues 161–170 (GEEEEEEETM) are compositionally biased toward acidic residues. Residues 247–263 (HGTSGFASTFSEDSPGN) are compositionally biased toward polar residues. Residues 297 to 312 (TDIKDRPGDVEMDRKQ) show a composition bias toward basic and acidic residues. Serine 314 carries the post-translational modification Phosphoserine. Positions 321–331 (TPTGAACLDRS) are enriched in low complexity. Residues lysine 381 and lysine 420 each participate in a glycyl lysine isopeptide (Lys-Gly) (interchain with G-Cter in SUMO2) cross-link. Serine 520 is subject to Phosphoserine. Residues 582 to 609 (QSYGTNSSDESGSFSEADSESCPVQDRG) form a disordered region. Polar residues predominate over residues 583-597 (SYGTNSSDESGSFSE). Residues 645–708 (FIHDIRRRSK…GELLDNFSCL (64 aa)) form the bZIP domain. Residues 650–666 (RRRSKNRIAAQRCRKRK) are basic motif. The segment at 670–677 (IQNLECEI) is leucine-zipper. The disordered stretch occupies residues 778 to 813 (PWVPSNTSENCTSGRRLEGSDPGTFSERGPPLEARS). Positions 781–790 (PSNTSENCTS) are enriched in polar residues. The Nuclear export signal signature appears at 819 to 839 (DFCQEMTEKCTTDEQPRKDYA).

The protein belongs to the bZIP family. CNC subfamily. As to quaternary structure, homodimer; disulfide-linked. Heterodimer of BACH2 and Maf-related transcription factors. In terms of processing, the reversible disulfide bond may provide a mechanism to regulate the activity in oxidative stress responses. Phosphorylation at Ser-520 downstream of the PI-3K pathway promotes nuclear export. In terms of tissue distribution, detected in brain and spleen.

The protein resides in the cytoplasm. Its subcellular location is the nucleus. Functionally, transcriptional regulator that acts as a repressor or activator. Binds to Maf recognition elements (MARE). Plays an important role in coordinating transcription activation and repression by MAFK. Induces apoptosis in response to oxidative stress through repression of the antiapoptotic factor HMOX1. Positively regulates the nuclear import of actin. Is a key regulator of adaptive immunity, crucial for the maintenance of regulatory T-cell function and B-cell maturation. The sequence is that of Transcription regulator protein BACH2 (Bach2) from Mus musculus (Mouse).